Reading from the N-terminus, the 497-residue chain is Serine hydroxymethyltransferase (497 aa).

(6S)-5,6,7,8-tetrahydrofolate contacts are provided by residues L176 and 180-182 (GHL). An N6-(pyridoxal phosphate)lysine modification is found at K289.

This sequence belongs to the SHMT family. In terms of assembly, homodimer. Requires pyridoxal 5'-phosphate as cofactor.

It is found in the cytoplasm. It catalyses the reaction (6R)-5,10-methylene-5,6,7,8-tetrahydrofolate + glycine + H2O = (6S)-5,6,7,8-tetrahydrofolate + L-serine. It functions in the pathway one-carbon metabolism; tetrahydrofolate interconversion. Its pathway is amino-acid biosynthesis; glycine biosynthesis; glycine from L-serine: step 1/1. Functionally, catalyzes the reversible interconversion of serine and glycine with tetrahydrofolate (THF) serving as the one-carbon carrier. This reaction serves as the major source of one-carbon groups required for the biosynthesis of purines, thymidylate, methionine, and other important biomolecules. Also exhibits THF-independent aldolase activity toward beta-hydroxyamino acids, producing glycine and aldehydes, via a retro-aldol mechanism. The chain is Serine hydroxymethyltransferase from Chlamydia trachomatis serovar A (strain ATCC VR-571B / DSM 19440 / HAR-13).